Consider the following 1728-residue polypeptide: Mitochondrial 3' processome subunit 1 (1728 aa).

The N-terminal 117 residues, 1–117 (MRRLILSQTL…AGKMTGSSRF (117 aa)), are a transit peptide targeting the mitochondrion. 3 disordered regions span residues 45-71 (HRKREGRMYGKPLRPVSDGENGASGDG), 88-156 (ESPV…IGQQ), and 829-863 (GCNRDGGPSRPNTATDSANKKVVSGKQTDNLPKGT).

Component of the mitochondrial 3' processome (MPsome) complex composed at least of terminal uridylyltransferase KRET1/TUT1, 3'-5' exonuclease DSS1, MPSS1, MPSS2 and MPSS3. Within the complex, interacts with KRET1.

The protein resides in the mitochondrion. In terms of biological role, as part of the mitochondrial 3' processome (MPsome), involved in the maturation of guided RNA (gRNA) precursors. This chain is Mitochondrial 3' processome subunit 1, found in Trypanosoma brucei brucei.